We begin with the raw amino-acid sequence, 462 residues long: 3-deoxy-D-manno-octulosonic acid transferase (462 aa).

A helical; Signal-anchor membrane pass occupies residues 2 to 22; it reads MLLYYILSFILLPVYFIIIFI. Positions 47–90 constitute an RPE1 insert domain; sequence SLLDLQMSVNQEGFKVDTEHKATSYVYIHRNASLMYKLSLERSY. Glutamate 104 functions as the Proton acceptor in the catalytic mechanism. CMP contacts are provided by residues 308–309, 349–351, and 374–377; these read PR, FGE, and NILE.

Belongs to the glycosyltransferase group 1 family.

It localises to the cell inner membrane. It catalyses the reaction lipid IVA (E. coli) + CMP-3-deoxy-beta-D-manno-octulosonate = alpha-Kdo-(2-&gt;6)-lipid IVA (E. coli) + CMP + H(+). The protein operates within bacterial outer membrane biogenesis; LPS core biosynthesis. Its function is as follows. Involved in lipopolysaccharide (LPS) biosynthesis. Catalyzes the transfer of 3-deoxy-D-manno-octulosonate (Kdo) residue(s) from CMP-Kdo to lipid IV(A), the tetraacyldisaccharide-1,4'-bisphosphate precursor of lipid A. This chain is 3-deoxy-D-manno-octulosonic acid transferase (waaA), found in Rickettsia typhi (strain ATCC VR-144 / Wilmington).